The sequence spans 502 residues: L-arabinose isomerase (502 aa).

Residues glutamate 307, glutamate 334, histidine 351, and histidine 450 each coordinate Mn(2+).

This sequence belongs to the arabinose isomerase family. It depends on Mn(2+) as a cofactor.

The catalysed reaction is beta-L-arabinopyranose = L-ribulose. The protein operates within carbohydrate degradation; L-arabinose degradation via L-ribulose; D-xylulose 5-phosphate from L-arabinose (bacterial route): step 1/3. Catalyzes the conversion of L-arabinose to L-ribulose. This Nocardioides sp. (strain ATCC BAA-499 / JS614) protein is L-arabinose isomerase.